The chain runs to 127 residues: Aspartate 1-decarboxylase (127 aa).

The active-site Schiff-base intermediate with substrate; via pyruvic acid is S25. S25 is subject to Pyruvic acid (Ser). Residue T57 participates in substrate binding. Y58 acts as the Proton donor in catalysis. 73 to 75 (GAA) is a binding site for substrate.

The protein belongs to the PanD family. In terms of assembly, heterooctamer of four alpha and four beta subunits. Pyruvate serves as cofactor. Post-translationally, is synthesized initially as an inactive proenzyme, which is activated by self-cleavage at a specific serine bond to produce a beta-subunit with a hydroxyl group at its C-terminus and an alpha-subunit with a pyruvoyl group at its N-terminus.

It is found in the cytoplasm. The enzyme catalyses L-aspartate + H(+) = beta-alanine + CO2. It functions in the pathway cofactor biosynthesis; (R)-pantothenate biosynthesis; beta-alanine from L-aspartate: step 1/1. Catalyzes the pyruvoyl-dependent decarboxylation of aspartate to produce beta-alanine. The chain is Aspartate 1-decarboxylase from Bacillus velezensis (strain DSM 23117 / BGSC 10A6 / LMG 26770 / FZB42) (Bacillus amyloliquefaciens subsp. plantarum).